The chain runs to 280 residues: Polyamine aminopropyltransferase (280 aa).

The region spanning 3 to 237 (DVYFMERDPY…YWWSFSVGSK (235 aa)) is the PABS domain. Q33 is an S-methyl-5'-thioadenosine binding site. Spermidine is bound by residues H64 and D88. Residues D108 and 139-140 (DG) contribute to the S-methyl-5'-thioadenosine site. The active-site Proton acceptor is the D157. Residue 157–160 (DSTD) participates in spermidine binding.

Belongs to the spermidine/spermine synthase family. Homodimer or homotetramer.

It localises to the cytoplasm. It catalyses the reaction S-adenosyl 3-(methylsulfanyl)propylamine + putrescine = S-methyl-5'-thioadenosine + spermidine + H(+). It functions in the pathway amine and polyamine biosynthesis; spermidine biosynthesis; spermidine from putrescine: step 1/1. Functionally, catalyzes the irreversible transfer of a propylamine group from the amino donor S-adenosylmethioninamine (decarboxy-AdoMet) to putrescine (1,4-diaminobutane) to yield spermidine. This chain is Polyamine aminopropyltransferase, found in Hydrogenobaculum sp. (strain Y04AAS1).